Consider the following 308-residue polypeptide: UDP-N-acetylenolpyruvoylglucosamine reductase (308 aa).

Residues 35-200 form the FAD-binding PCMH-type domain; the sequence is RVGGPAQVLF…TSARFRGEPM (166 aa). The active site involves Arg-180. The span at 211-226 shows a compositional bias: basic and acidic residues; that stretch reads EVQRHRETAQPVREKT. A disordered region spans residues 211-236; that stretch reads EVQRHRETAQPVREKTGGSTFKNPPG. Residue Ser-229 is the Proton donor of the active site. Glu-299 is an active-site residue.

The protein belongs to the MurB family. Requires FAD as cofactor.

It is found in the cytoplasm. It carries out the reaction UDP-N-acetyl-alpha-D-muramate + NADP(+) = UDP-N-acetyl-3-O-(1-carboxyvinyl)-alpha-D-glucosamine + NADPH + H(+). Its pathway is cell wall biogenesis; peptidoglycan biosynthesis. Cell wall formation. This is UDP-N-acetylenolpyruvoylglucosamine reductase from Rhodopseudomonas palustris (strain BisB18).